The following is a 317-amino-acid chain: Putative toluene-4-sulfonate monooxygenase system reductase subunit TsaB2 (317 aa).

The 103-residue stretch at 4-106 (DVPVTVAAVR…SAPRNLFEMA (103 aa)) folds into the FAD-binding FR-type domain. An NAD(+)-binding site is contributed by 110–220 (RRVLLLAGGI…PGSVRMERFK (111 aa)). Residues 232–317 (FELVLQRAGL…CGGGRLVLDI (86 aa)) enclose the 2Fe-2S ferredoxin-type domain. Residues C266, C271, and C274 each contribute to the [2Fe-2S] cluster site.

Monomer. Part of the p-toluenesulfonate methyl-monooxygenase complex TsaBM, comprising the reductase TsaB and the oxygenase TsaM. FMN is required as a cofactor.

Involved in the toluene-4-sulfonate degradation pathway. In Comamonas testosteroni (Pseudomonas testosteroni), this protein is Putative toluene-4-sulfonate monooxygenase system reductase subunit TsaB2 (tsaB2).